The chain runs to 285 residues: Inositol monophosphatase 1 (285 aa).

4 residues coordinate Mg(2+): Glu-73, Asp-93, Ile-95, and Asp-96. Glu-73 is a substrate binding site. Substrate contacts are provided by residues 95-98 (IDGT), 198-200 (GTA), Glu-217, and Asp-224. Asp-224 serves as a coordination point for Mg(2+).

It belongs to the inositol monophosphatase superfamily. Homodimer. Requires Mg(2+) as cofactor.

It is found in the cytoplasm. The catalysed reaction is a myo-inositol phosphate + H2O = myo-inositol + phosphate. It catalyses the reaction 1D-myo-inositol 1-phosphate + H2O = myo-inositol + phosphate. It carries out the reaction 1D-myo-inositol 2-phosphate + H2O = myo-inositol + phosphate. The enzyme catalyses 1D-myo-inositol 3-phosphate + H2O = myo-inositol + phosphate. The catalysed reaction is 1D-myo-inositol 4-phosphate + H2O = myo-inositol + phosphate. It catalyses the reaction 1D-myo-inositol 5-phosphate + H2O = myo-inositol + phosphate. It carries out the reaction 1D-myo-inositol 6-phosphate + H2O = myo-inositol + phosphate. The enzyme catalyses scyllo-inositol 1-phosphate + H2O = scyllo-inositol + phosphate. The catalysed reaction is alpha-D-galactose 1-phosphate + H2O = D-galactose + phosphate. It catalyses the reaction alpha-D-glucose 1-phosphate + H2O = D-glucose + phosphate. It carries out the reaction D-glucose 6-phosphate + H2O = D-glucose + phosphate. The enzyme catalyses beta-D-fructose 1-phosphate + H2O = D-fructose + phosphate. The catalysed reaction is glycerol 2-phosphate + H2O = glycerol + phosphate. It catalyses the reaction adenosine 2'-phosphate + H2O = adenosine + phosphate. It participates in polyol metabolism; myo-inositol biosynthesis; myo-inositol from D-glucose 6-phosphate: step 2/2. Its activity is regulated as follows. Inhibited by Li(+), Ca(2+) and Mn(2+), but also by Mg(2+) at concentrations above 3 mM. In terms of biological role, phosphatase involved in the dephosphorylation of myo-inositol monophosphate to generate myo-inositol. Is also able to dephosphorylate scyllo-inositol-phosphate, myo-inositol 1,4-diphosphate, scyllo-inositol-1,3-diphosphate and scyllo-inositol-1,4-diphosphate. Also dephosphorylates in vitro other sugar-phosphates including D-galactose-1-phosphate, glucose-1-phosphate, glucose-6-phosphate, fructose-1-phosphate, beta-glycerophosphate and 2'-AMP. Responsible for the provision of inositol required for synthesis of phosphatidylinositol and polyphosphoinositides, and involved in maintaining normal brain function. Has been implicated as the pharmacological target for lithium Li(+) action in brain. This is Inositol monophosphatase 1 (impa1) from Xenopus laevis (African clawed frog).